Consider the following 282-residue polypeptide: tRNA pseudouridine synthase B (282 aa).

Asp39 (nucleophile) is an active-site residue.

It belongs to the pseudouridine synthase TruB family. Type 1 subfamily.

It catalyses the reaction uridine(55) in tRNA = pseudouridine(55) in tRNA. Its function is as follows. Responsible for synthesis of pseudouridine from uracil-55 in the psi GC loop of transfer RNAs. This is tRNA pseudouridine synthase B from Borrelia garinii subsp. bavariensis (strain ATCC BAA-2496 / DSM 23469 / PBi) (Borreliella bavariensis).